The following is a 91-amino-acid chain: Small ribosomal subunit protein uS19 (91 aa).

Belongs to the universal ribosomal protein uS19 family.

In terms of biological role, protein S19 forms a complex with S13 that binds strongly to the 16S ribosomal RNA. This is Small ribosomal subunit protein uS19 from Cupriavidus pinatubonensis (strain JMP 134 / LMG 1197) (Cupriavidus necator (strain JMP 134)).